A 100-amino-acid polypeptide reads, in one-letter code: Large ribosomal subunit protein uL23 (100 aa).

It belongs to the universal ribosomal protein uL23 family. In terms of assembly, part of the 50S ribosomal subunit. Contacts protein L29, and trigger factor when it is bound to the ribosome.

Functionally, one of the early assembly proteins it binds 23S rRNA. One of the proteins that surrounds the polypeptide exit tunnel on the outside of the ribosome. Forms the main docking site for trigger factor binding to the ribosome. The sequence is that of Large ribosomal subunit protein uL23 from Lactobacillus acidophilus (strain ATCC 700396 / NCK56 / N2 / NCFM).